The chain runs to 161 residues: Ragulator complex protein LAMTOR1 (161 aa).

A disordered region spans residues 1–43; it reads MGCCYSSENEDSDQDREERKLLLDPSSTPTKALNGAEPNYHSL. Gly2 is lipidated: N-myristoyl glycine. S-palmitoyl cysteine attachment occurs at residues Cys3 and Cys4. Residue Lys20 forms a Glycyl lysine isopeptide (Lys-Gly) (interchain with G-Cter in ubiquitin) linkage. Ser27 carries the phosphoserine modification. Thr28 is subject to Phosphothreonine. Lys31 is covalently cross-linked (Glycyl lysine isopeptide (Lys-Gly) (interchain with G-Cter in ubiquitin)). Residues Ser42 and Ser56 each carry the phosphoserine modification. A Glycyl lysine isopeptide (Lys-Gly) (interchain with G-Cter in ubiquitin) cross-link involves residue Lys60. The residue at position 98 (Ser98) is a Phosphoserine. Residues Lys103 and Lys104 each participate in a glycyl lysine isopeptide (Lys-Gly) (interchain with G-Cter in ubiquitin) cross-link. The segment at 121 to 161 is interaction with LAMTOR2 and LAMTOR3; it reads SEPIPFSDLQQVSRIAAYAYSALSQIRVDAKEELVVQFGIP. Position 141 is a phosphoserine (Ser141).

This sequence belongs to the LAMTOR1 family. In terms of assembly, part of the Ragulator complex composed of LAMTOR1, LAMTOR2, LAMTOR3, LAMTOR4 and LAMTOR5. LAMTOR4 and LAMTOR5 form a heterodimer that interacts, through LAMTOR1, with a LAMTOR2, LAMTOR3 heterodimer. Interacts with LAMTOR2 and LAMTOR3; the interaction is direct. The Ragulator complex interacts with both the mTORC1 complex and heterodimers constituted of the Rag GTPases RagA/RRAGA, RagB/RRAGB, RagC/RRAGC and RagD/RRAGD; regulated by amino acid availability. The Ragulator complex interacts with SLC38A9; the probable amino acid sensor. Component of the lysosomal folliculin complex (LFC), composed of FLCN, FNIP1 (or FNIP2), RagA/RRAGA or RagB/RRAGB GDP-bound, RagC/RRAGC or RagD/RRAGD GTP-bound, and Ragulator. Associates with the lysosomal V-ATPase complex; interaction promotes the guanine nucleotide exchange factor (GEF) of the Ragulator complex. Interacts with MMP14. Interacts with CDKN1B; prevents the interaction of CDKN1B with RHOA leaving RHOA in a form accessible to activation by ARHGEF2. Interacts with PIP4P1. Post-translationally, N-terminal myristoylation and palmitoylation mediates its recruitment to lysosome membranes, thereby promoting localization of the Ragulator complex to lysosomes. N-myristoylation by NMT1 is required for palmitoylation at Cys-3 and Cys-4. In terms of processing, ubiquitinated at Lys-60, Lys-103 and Lys-104 by UBE3A in neurons, promoting its degradation by the proteasome, thereby limiting mTORC1 signaling and activity-dependent synaptic remodeling. Ubiquitination at Lys-20 impairs the association with the lysosomal V-ATPase complex. Deubiquitination at Lys-20 by USP32 promotes the association with the lysosomal V-ATPase complex and subsequent activation of the mTORC1 complex.

Its subcellular location is the lysosome membrane. It is found in the late endosome membrane. Key component of the Ragulator complex, a multiprotein complex involved in amino acid sensing and activation of mTORC1, a signaling complex promoting cell growth in response to growth factors, energy levels, and amino acids. Activated by amino acids through a mechanism involving the lysosomal V-ATPase, the Ragulator plays a dual role for the small GTPases Rag (RagA/RRAGA, RagB/RRAGB, RagC/RRAGC and/or RagD/RRAGD): it (1) acts as a guanine nucleotide exchange factor (GEF), activating the small GTPases Rag and (2) mediates recruitment of Rag GTPases to the lysosome membrane. Activated Ragulator and Rag GTPases function as a scaffold recruiting mTORC1 to lysosomes where it is in turn activated. LAMTOR1 is directly responsible for anchoring the Ragulator complex to the lysosomal membrane. LAMTOR1 wraps around the other subunits of the Ragulator complex to hold them in place and interacts with the Rag GTPases, thereby playing a key role in the recruitment of the mTORC1 complex to lysosomes. Also involved in the control of embryonic stem cells differentiation via non-canonical RagC/RRAGC and RagD/RRAGD activation: together with FLCN, it is necessary to recruit and activate RagC/RRAGC and RagD/RRAGD at the lysosomes, and to induce exit of embryonic stem cells from pluripotency via non-canonical, mTOR-independent TFE3 inactivation. Also required for late endosomes/lysosomes biogenesis it may regulate both the recycling of receptors through endosomes and the MAPK signaling pathway through recruitment of some of its components to late endosomes. May be involved in cholesterol homeostasis regulating LDL uptake and cholesterol release from late endosomes/lysosomes. May also play a role in RHOA activation. The chain is Ragulator complex protein LAMTOR1 from Mus musculus (Mouse).